Here is a 908-residue protein sequence, read N- to C-terminus: DNA (cytosine-5)-methyltransferase 3A (908 aa).

Over residues Met1–Ser13 the composition is skewed to polar residues. Disordered regions lie at residues Met1–Arg183 and Ser226–Glu281. The span at Leu14–Glu37 shows a compositional bias: basic and acidic residues. Residues Lys44 to His54 show a composition bias toward basic residues. A compositionally biased stretch (polar residues) spans Thr69–Gly80. At Ser102 the chain carries Phosphoserine. Low complexity predominate over residues Gly110–Ala124. Thr120 carries the phosphothreonine modification. Residue Lys158 forms a Glycyl lysine isopeptide (Lys-Gly) (interchain with G-Cter in SUMO2) linkage. Arg167 carries the post-translational modification Omega-N-methylarginine. The interval Ser195–Asn399 is interaction with DNMT1 and DNMT3B. Phosphoserine occurs at positions 239 and 251. Residues Ala242–Thr256 show a composition bias toward polar residues. The residue at position 257 (Thr257) is a Phosphothreonine. The region spanning Thr257–Ser315 is the PWWP domain. Basic and acidic residues predominate over residues Ala265 to Asp275. Phosphoserine occurs at positions 386 and 389. The disordered stretch occupies residues Ala443–Lys462. The 133-residue stretch at Glu478–Asp610 folds into the ADD domain. The segment at Ile489–Glu519 adopts a GATA-type; atypical zinc-finger fold. The tract at residues Cys490–Cys582 is interaction with the PRC2/EED-EZH2 complex. The PHD-type; atypical zinc-finger motif lies at Gln530–Gly586. The 279-residue stretch at Ile630–Val908 folds into the SAM-dependent MTase C5-type domain. S-adenosyl-L-methionine contacts are provided by residues Asp637–Thr641, Glu660, and Asp682–Arg684. Cys706 is an active-site residue. At Cys706 the chain carries S-methylcysteine; by autocatalysis. Residue Arg887–Trp889 participates in S-adenosyl-L-methionine binding.

This sequence belongs to the class I-like SAM-binding methyltransferase superfamily. C5-methyltransferase family. Heterotetramer composed of 1 DNMT3A homodimer and 2 DNMT3L subunits (DNMT3L-DNMT3A-DNMT3A-DNMT3L). Interacts with DNMT1 and DNMT3B. Interacts with MPHOSPH8. Interacts with histone H3 that is not methylated at 'Lys-4' (H3K4). Binds the ZBTB18 transcriptional repressor. Interacts with SETDB1. Associates with HDAC1 through its ADD domain. Interacts with UHRF1. Interacts with the PRC2/EED-EZH2 complex. Interacts with UBC9, PIAS1 and PIAS2. Interacts with SPOCD1. Interacts with ZNF263; recruited to the SIX3 promoter along with other proteins involved in chromatin modification and transcriptional corepression where it contributes to transcriptional repression. Sumoylated; sumoylation disrupts the ability to interact with histone deacetylases (HDAC1 and HDAC2) and repress transcription. Post-translationally, auto-methylated at Cys-706: auto-methylation takes place in absence of DNA substrate and inactivates the DNA methyltransferase activity. Inactivation by auto-methylation may be used to inactivate unused DNA methyltransferases in the cell.

Its subcellular location is the nucleus. It is found in the chromosome. The protein resides in the cytoplasm. It catalyses the reaction a 2'-deoxycytidine in DNA + S-adenosyl-L-methionine = a 5-methyl-2'-deoxycytidine in DNA + S-adenosyl-L-homocysteine + H(+). It carries out the reaction L-cysteinyl-[protein] + S-adenosyl-L-methionine = S-methyl-L-cysteinyl-[protein] + S-adenosyl-L-homocysteine + H(+). With respect to regulation, activated by binding to the regulatory factor DNMT3L. Auto-methylation at Cys-706 in absence of DNA inactivates the DNA methyltransferase activity. Its function is as follows. Required for genome-wide de novo methylation and is essential for the establishment of DNA methylation patterns during development. DNA methylation is coordinated with methylation of histones. It modifies DNA in a non-processive manner and also methylates non-CpG sites. May preferentially methylate DNA linker between 2 nucleosomal cores and is inhibited by histone H1. Plays a role in paternal and maternal imprinting. Required for methylation of most imprinted loci in germ cells. Acts as a transcriptional corepressor for ZBTB18. Recruited to trimethylated 'Lys-36' of histone H3 (H3K36me3) sites. Can actively repress transcription through the recruitment of HDAC activity. Also has weak auto-methylation activity on Cys-706 in absence of DNA. The protein is DNA (cytosine-5)-methyltransferase 3A (Dnmt3a) of Rattus norvegicus (Rat).